Here is a 530-residue protein sequence, read N- to C-terminus: MENSRPIKRALLSVSDKAGIIEFAKELSARGVEILSTGGTCKLLAENDIKVTEVSDYTGFPEMMDGRVKTLHPKIHGGILARRGIDEVIMSENDIAPIDLVVVNLYPFAETVARPDCSLEDAIENIDIGGPTMVRAAAKNHKDVGIVVNAGDYPRVLKEMQENNNSLAYKTRFDLAIAAYEHTAQYDGMIANYFGTMVPSYGENSEGDLESKFPRTINMQFKKKQDMRYGENSHQSAAFYVEDDIQEASVSTATQLQGKALSYNNIADTDAALECVKEFSEPACVIVKHSNPCGVAVAGNILDAYEGAYKTDPTSAFGGIIAFNRELDAKTAEAIVSRQFVEVIIAPSVSPEAAKIVATKKNLRLLACGEWSDKTTQFDIKRVNGGLLVQDRDQGMVGLEDLKVVTKRQPTEAELKDLLFSWKVAKFVKSNAIVYVKNNATVGVGAGQMSRVYSAKVAGIKAADENLVVAGSVMSSDAFFPFRDGIDAAAEAGISCVIQPGGSMRDNEVIAAADEHGMAMVFTGMRHFRH.

One can recognise an MGS-like domain in the interval 1 to 148 (MENSRPIKRA…KNHKDVGIVV (148 aa)).

This sequence belongs to the PurH family.

It catalyses the reaction (6R)-10-formyltetrahydrofolate + 5-amino-1-(5-phospho-beta-D-ribosyl)imidazole-4-carboxamide = 5-formamido-1-(5-phospho-D-ribosyl)imidazole-4-carboxamide + (6S)-5,6,7,8-tetrahydrofolate. The catalysed reaction is IMP + H2O = 5-formamido-1-(5-phospho-D-ribosyl)imidazole-4-carboxamide. Its pathway is purine metabolism; IMP biosynthesis via de novo pathway; 5-formamido-1-(5-phospho-D-ribosyl)imidazole-4-carboxamide from 5-amino-1-(5-phospho-D-ribosyl)imidazole-4-carboxamide (10-formyl THF route): step 1/1. The protein operates within purine metabolism; IMP biosynthesis via de novo pathway; IMP from 5-formamido-1-(5-phospho-D-ribosyl)imidazole-4-carboxamide: step 1/1. This is Bifunctional purine biosynthesis protein PurH from Psychromonas ingrahamii (strain DSM 17664 / CCUG 51855 / 37).